We begin with the raw amino-acid sequence, 522 residues long: Protein RCC2 (522 aa).

Residues 1–83 (MPRKKAAAAA…TAGKAGGAAV (83 aa)) are disordered. Ser-16 is modified (phosphoserine). Thr-20 is subject to Phosphothreonine. Residues 24–36 (GPRKRGGPAGRKR) are compositionally biased toward basic residues. Phosphoserine is present on residues Ser-43, Ser-44, Ser-45, Ser-46, Ser-50, and Ser-51. Over residues 71-82 (RPATAGKAGGAA) the composition is skewed to low complexity. N6-acetyllysine occurs at positions 92 and 124. 7 RCC1 repeats span residues 103 to 165 (KGQL…SLLI), 168 to 219 (EGKL…ALTE), 221 to 271 (GSVF…IMDC), 273 to 347 (GNLY…VLDS), 348 to 401 (QKRV…AVSE), 403 to 447 (GGLF…VAAD), and 448 to 501 (ESTI…VIAR). Lys-293 carries the N6-acetyllysine modification. The required for interaction with RAC1 stretch occupies residues 318-325 (KTKDGQIL). Position 342 is a phosphothreonine (Thr-342). Position 377 is an N6-acetyllysine (Lys-377). Residues 502–515 (DESETEKEKIKKLP) are compositionally biased toward basic and acidic residues. The interval 502–522 (DESETEKEKIKKLPEYNPRTL) is disordered.

As to quaternary structure, interacts with RAC1. Interacts with nucleotide-free and with GDP and GTP-bound forms of RAC1, with a slight preference for GDP-bound RAC1. Binds preferentially to the nucleotide-free form of RAC1. Interacts with CORO1C. Interacts with microtubules.

It localises to the nucleus. The protein localises to the nucleolus. The protein resides in the cytoplasm. It is found in the cytoskeleton. Its subcellular location is the chromosome. It localises to the centromere. The protein localises to the spindle. The protein resides in the midbody. It is found in the cell membrane. Its function is as follows. Multifunctional protein that may affect its functions by regulating the activity of small GTPases, such as RAC1 and RALA. Required for normal progress through the cell cycle, both during interphase and during mitosis. Required for the presence of normal levels of MAD2L1, AURKB and BIRC5 on inner centromeres during mitosis, and for normal attachment of kinetochores to mitotic spindles. Required for normal organization of the microtubule cytoskeleton in interphase cells. Functions as guanine nucleotide exchange factor (GEF) for RALA. Interferes with the activation of RAC1 by guanine nucleotide exchange factors. Prevents accumulation of active, GTP-bound RAC1, and suppresses RAC1-mediated reorganization of the actin cytoskeleton and formation of membrane protrusions. Required for normal cellular responses to contacts with the extracellular matrix of adjacent cells, and for directional cell migration in response to a fibronectin gradient (in vitro). This chain is Protein RCC2 (RCC2), found in Homo sapiens (Human).